Reading from the N-terminus, the 224-residue chain is Cytidylate kinase (224 aa).

ATP is bound at residue Gly-14–Thr-22.

The protein belongs to the cytidylate kinase family. Type 1 subfamily.

It is found in the cytoplasm. The catalysed reaction is CMP + ATP = CDP + ADP. The enzyme catalyses dCMP + ATP = dCDP + ADP. The polypeptide is Cytidylate kinase (Mycoplasmoides gallisepticum (strain R(low / passage 15 / clone 2)) (Mycoplasma gallisepticum)).